Consider the following 51-residue polypeptide: Large ribosomal subunit protein eL39 (51 aa).

This sequence belongs to the eukaryotic ribosomal protein eL39 family. In terms of assembly, interacts with YIH1.

The polypeptide is Large ribosomal subunit protein eL39 (RPL39) (Kluyveromyces lactis (strain ATCC 8585 / CBS 2359 / DSM 70799 / NBRC 1267 / NRRL Y-1140 / WM37) (Yeast)).